Reading from the N-terminus, the 555-residue chain is Vetispiradiene synthase 1 (555 aa).

Residues aspartate 308, aspartate 312, aspartate 451, threonine 455, and glutamate 459 each contribute to the Mg(2+) site. Residues 308–312 carry the DDXXD motif motif; sequence DDTFD.

This sequence belongs to the terpene synthase family. Tpsa subfamily. The cofactor is Mg(2+).

Its subcellular location is the cytoplasm. It carries out the reaction (2E,6E)-farnesyl diphosphate = (-)-vetispiradiene + diphosphate. It functions in the pathway secondary metabolite biosynthesis; terpenoid biosynthesis. Sesquiterpene synthase that catalyzes the formation of vetispiradiene from trans,trans-farnesyl diphosphate. The initial internal cyclization produces the monocyclic intermediate germacrene A. The chain is Vetispiradiene synthase 1 from Hyoscyamus muticus (Egyptian henbane).